The chain runs to 173 residues: Crossover junction endodeoxyribonuclease RuvC (173 aa).

Residues aspartate 11, glutamate 71, and aspartate 143 contribute to the active site. 3 residues coordinate Mg(2+): aspartate 11, glutamate 71, and aspartate 143.

Belongs to the RuvC family. Homodimer which binds Holliday junction (HJ) DNA. The HJ becomes 2-fold symmetrical on binding to RuvC with unstacked arms; it has a different conformation from HJ DNA in complex with RuvA. In the full resolvosome a probable DNA-RuvA(4)-RuvB(12)-RuvC(2) complex forms which resolves the HJ. The cofactor is Mg(2+).

It is found in the cytoplasm. It carries out the reaction Endonucleolytic cleavage at a junction such as a reciprocal single-stranded crossover between two homologous DNA duplexes (Holliday junction).. Functionally, the RuvA-RuvB-RuvC complex processes Holliday junction (HJ) DNA during genetic recombination and DNA repair. Endonuclease that resolves HJ intermediates. Cleaves cruciform DNA by making single-stranded nicks across the HJ at symmetrical positions within the homologous arms, yielding a 5'-phosphate and a 3'-hydroxyl group; requires a central core of homology in the junction. The consensus cleavage sequence is 5'-(A/T)TT(C/G)-3'. Cleavage occurs on the 3'-side of the TT dinucleotide at the point of strand exchange. HJ branch migration catalyzed by RuvA-RuvB allows RuvC to scan DNA until it finds its consensus sequence, where it cleaves and resolves the cruciform DNA. This Brucella suis (strain ATCC 23445 / NCTC 10510) protein is Crossover junction endodeoxyribonuclease RuvC.